The sequence spans 364 residues: tRNA-specific 2-thiouridylase MnmA 1 (364 aa).

ATP is bound by residues 10-17 (GMSGGVDS) and Met36. The active-site Nucleophile is Cys106. The cysteines at positions 106 and 204 are disulfide-linked. Gly130 contacts ATP. Residues 154 to 156 (KDQ) form an interaction with tRNA region. The active-site Cysteine persulfide intermediate is Cys204. The segment at 310-311 (RY) is interaction with tRNA.

This sequence belongs to the MnmA/TRMU family.

Its subcellular location is the cytoplasm. The catalysed reaction is S-sulfanyl-L-cysteinyl-[protein] + uridine(34) in tRNA + AH2 + ATP = 2-thiouridine(34) in tRNA + L-cysteinyl-[protein] + A + AMP + diphosphate + H(+). Catalyzes the 2-thiolation of uridine at the wobble position (U34) of tRNA, leading to the formation of s(2)U34. This chain is tRNA-specific 2-thiouridylase MnmA 1, found in Thermoanaerobacter sp. (strain X514).